The chain runs to 286 residues: MWQAISNLLSEQHTDGAEIELRNELPGGEIHAAWHLRFGGKDYFVKCDERELLPIFTAEADQLELLSRCKTVSVPQVFAVGSDRDYSFLVMEYLPPRPLDAHNAFLLGQQIAHLHQWSDQPQFGLDFDNDLSTTPQPNAWQRRWSTFFAEQRIGWQLELAAEKGLHFGDIDNIVESVQQRLSSHQPQPSLLHGDLWSGNCALGPNGPYIFDPACYWGDRECDLAMLPLHPEQPPQIYDGYQSVSPLPAGFLERQPIYQLYTLLNRAILFGGQHLVTAQKALDEALQ.

92-94 (EYL) lines the ATP pocket. Asp194 functions as the Proton acceptor in the catalytic mechanism.

The protein belongs to the fructosamine kinase family.

Ketoamine kinase that phosphorylates ketoamines on the third carbon of the sugar moiety to generate ketoamine 3-phosphate. This chain is Probable ketoamine kinase EAE_16955, found in Klebsiella aerogenes (strain ATCC 13048 / DSM 30053 / CCUG 1429 / JCM 1235 / KCTC 2190 / NBRC 13534 / NCIMB 10102 / NCTC 10006 / CDC 819-56) (Enterobacter aerogenes).